The chain runs to 143 residues: Ribonuclease P protein component 2 (143 aa).

It belongs to the eukaryotic/archaeal RNase P protein component 2 family. Consists of a catalytic RNA component and at least 4-5 protein subunits.

It is found in the cytoplasm. It carries out the reaction Endonucleolytic cleavage of RNA, removing 5'-extranucleotides from tRNA precursor.. Its function is as follows. Part of ribonuclease P, a protein complex that generates mature tRNA molecules by cleaving their 5'-ends. The protein is Ribonuclease P protein component 2 of Saccharolobus solfataricus (strain ATCC 35092 / DSM 1617 / JCM 11322 / P2) (Sulfolobus solfataricus).